A 58-amino-acid chain; its full sequence is Small ribosomal subunit protein bS21 (58 aa).

The protein belongs to the bacterial ribosomal protein bS21 family.

The sequence is that of Small ribosomal subunit protein bS21 from Prochlorococcus marinus (strain MIT 9515).